We begin with the raw amino-acid sequence, 302 residues long: UPF0725 protein At1g23960 (302 aa).

Ala2 carries the post-translational modification N-acetylalanine.

This sequence belongs to the UPF0725 (EMB2204) family.

The protein is UPF0725 protein At1g23960 of Arabidopsis thaliana (Mouse-ear cress).